A 583-amino-acid polypeptide reads, in one-letter code: MMSRLNSVVIKLWLTIILIVTTVLILLSIALITFMQYYFTQETENAIREDARRISSLVEQSHNKEEAIKYSQTLIENPGGLMIINNKHRQSTASLSNIKKQMLNEVVNNDHFDDVFDKGKSVTRNVTIKEKGSSQTYILLGYPTKAQKNSHSKYSGVFIYKDLKSIEDTNNAITIITIITAVIFLTITTVFAFFLSSRITKPLRRLRDQATRVSEGDYSYKPSVTTKDEIGQLSQAFNQMSTEIEEHVDALSTSKNIRDSLINSMVEGVLGINESRQIILSNKMANDIMDNIDEDAKAFLLRQIEDTFKSKQTEMRDLEMNARFFVVTTSYIDKIEQGGKSGVVVTVRDMTNEHNLDQMKKDFIANVSHELRTPISLLQGYTESIVDGIVTEPDEIKESLAVVLDESKRLNRLVNELLNVARMDAEGLSVNKEVQPIAALLDKMKIKYRQQADDLGLNMTFNYCKKRVWSYDMDRMDQVLTNLIDNASRYTKPGDEIAITCDENESEDILYIKDTGTGIAPEHLQQVFDRFYKVDAARTRGKQGTGLGLFICKMIIEEHGGSIDVKSELGKGTTFIIKLPKPE.

At 1–11 the chain is on the cytoplasmic side; the sequence is MMSRLNSVVIK. A helical membrane pass occupies residues 12 to 32; it reads LWLTIILIVTTVLILLSIALI. At 33–174 the chain is on the extracellular side; sequence TFMQYYFTQE…SIEDTNNAIT (142 aa). The helical transmembrane segment at 175–195 threads the bilayer; it reads IITIITAVIFLTITTVFAFFL. Topologically, residues 196–583 are cytoplasmic; that stretch reads SSRITKPLRR…TFIIKLPKPE (388 aa). The HAMP domain maps to 197–249; the sequence is SRITKPLRRLRDQATRVSEGDYSYKPSVTTKDEIGQLSQAFNQMSTEIEEHVD. The Histidine kinase domain maps to 366–583; sequence NVSHELRTPI…TFIIKLPKPE (218 aa). His369 is modified (phosphohistidine; by autocatalysis).

Its subcellular location is the cell membrane. It catalyses the reaction ATP + protein L-histidine = ADP + protein N-phospho-L-histidine.. In terms of biological role, member of the two-component regulatory system SrrA/SrrB, which is involved in the global regulation of staphylococcal virulence factors in response to environmental oxygen levels as well as biofilm formation. Also plays an essential role in host-derived nitric oxide resistance by regulating hmp/flavohemoglobin, an enzyme that detoxifies nitric oxide by converting it to nitrate. Functions as a sensor protein kinase which is autophosphorylated at a histidine residue and transfers its phosphate group to SrrA. In turn, SrrA binds to the upstream promoter regions of the target genes to positively and negatively regulate their expression. This chain is Sensor protein SrrB (srrB), found in Staphylococcus aureus (strain Mu50 / ATCC 700699).